Here is a 776-residue protein sequence, read N- to C-terminus: Homoaconitase, mitochondrial (776 aa).

The N-terminal 38 residues, 1 to 38 (MQSRLVSQSGLGRRWAVLRCALSKTYQRRTLTSTRRQF), are a transit peptide targeting the mitochondrion. Positions 394, 463, and 466 each coordinate [4Fe-4S] cluster.

This sequence belongs to the aconitase/IPM isomerase family. It depends on [4Fe-4S] cluster as a cofactor.

The protein resides in the mitochondrion. It catalyses the reaction (2R,3S)-homoisocitrate = cis-homoaconitate + H2O. Its pathway is amino-acid biosynthesis; L-lysine biosynthesis via AAA pathway; L-alpha-aminoadipate from 2-oxoglutarate: step 3/5. Functionally, catalyzes the reversible hydration of cis-homoaconitate to (2R,3S)-homoisocitrate, a step in the alpha-aminoadipate pathway for lysine biosynthesis. The chain is Homoaconitase, mitochondrial (lys4) from Emericella nidulans (strain FGSC A4 / ATCC 38163 / CBS 112.46 / NRRL 194 / M139) (Aspergillus nidulans).